Here is a 640-residue protein sequence, read N- to C-terminus: Asparagine synthetase domain-containing protein 1 (640 aa).

The active-site For GATase activity is the Cys-2. The 183-residue stretch at 2–184 (CGICCAVSFS…ASGIFRIDLK (183 aa)) folds into the Glutamine amidotransferase type-2 domain. An Asparagine synthetase domain is found at 286–602 (QFIGVLSTAV…GLTASALLPK (317 aa)).

This is Asparagine synthetase domain-containing protein 1 (ASNSD1) from Bos taurus (Bovine).